Reading from the N-terminus, the 526-residue chain is MASSFQLYKALLFFSSLLSAVQAQKVGTQQAEVHPGLTWQTCTSSGSCTTVNGEVTIDANWRWLHTVNGYTNCYTGNEWDTSICTSNEVCAEQCAVDGANYASTYGITTSGSSLRLNFVTQSQQKNIGSRVYLMDDEDTYTMFYLLNKEFTFDVDVSELPCGLNGAVYFVSMDADGGKSRYATNEAGAKYGTGYCDSQCPRDLKFINGVANVEGWESSDTNPNGGVGNHGSCCAEMDIWEANSISTAFTPHPCDTPGQTLCTGDSCGGTYSNDRYGGTCDPDGCDFNSYRQGNKTFYGPGLTVDTNSPVTVVTQFLTDDNTDTGTLSEIKRFYVQNGVVIPNSESTYPANPGNSITTEFCESQKELFGDVDVFSAHGGMAGMGAALEQGMVLVLSLWDDNYSNMLWLDSNYPTDADPTQPGIARGTCPTDSGVPSEVEAQYPNAYVVYSNIKFGPIGSTFGNGGGSGPTTTVTTSTATSTTSSATSTATGQAQHWEQCGGNGWTGPTVCASPWACTVVNSWYSQCL.

The N-terminal stretch at 1–23 (MASSFQLYKALLFFSSLLSAVQA) is a signal peptide. A catalytic region spans residues 24–458 (QKVGTQQAEV…SNIKFGPIGS (435 aa)). The active-site Nucleophile is the glutamate 235. The active-site Proton donor is the glutamate 240. Residues asparagine 293 and asparagine 400 are each glycosylated (N-linked (GlcNAc...) asparagine). Positions 459–490 (TFGNGGGSGPTTTVTTSTATSTTSSATSTATG) are ser/Thr-rich linker. A disordered region spans residues 464 to 488 (GGSGPTTTVTTSTATSTTSSATSTA). Low complexity predominate over residues 468–488 (PTTTVTTSTATSTTSSATSTA). The CBM1 domain maps to 490 to 526 (GQAQHWEQCGGNGWTGPTVCASPWACTVVNSWYSQCL). Cystine bridges form between cysteine 498–cysteine 515 and cysteine 509–cysteine 525.

Belongs to the glycosyl hydrolase 7 (cellulase C) family.

Its subcellular location is the secreted. It catalyses the reaction Hydrolysis of (1-&gt;4)-beta-D-glucosidic linkages in cellulose and cellotetraose, releasing cellobiose from the non-reducing ends of the chains.. The biological conversion of cellulose to glucose generally requires three types of hydrolytic enzymes: (1) Endoglucanases which cut internal beta-1,4-glucosidic bonds; (2) Exocellobiohydrolases that cut the disaccharide cellobiose from the non-reducing end of the cellulose polymer chain; (3) Beta-1,4-glucosidases which hydrolyze the cellobiose and other short cello-oligosaccharides to glucose. The sequence is that of 1,4-beta-D-glucan cellobiohydrolase B (cbhB) from Emericella nidulans (strain FGSC A4 / ATCC 38163 / CBS 112.46 / NRRL 194 / M139) (Aspergillus nidulans).